We begin with the raw amino-acid sequence, 255 residues long: Acetylglutamate kinase (255 aa).

Residues 40 to 41 (GG), Arg62, and Asn153 contribute to the substrate site.

It belongs to the acetylglutamate kinase family. ArgB subfamily.

Its subcellular location is the cytoplasm. It catalyses the reaction N-acetyl-L-glutamate + ATP = N-acetyl-L-glutamyl 5-phosphate + ADP. It functions in the pathway amino-acid biosynthesis; L-arginine biosynthesis; N(2)-acetyl-L-ornithine from L-glutamate: step 2/4. Catalyzes the ATP-dependent phosphorylation of N-acetyl-L-glutamate. In Bacillus cereus (strain ATCC 14579 / DSM 31 / CCUG 7414 / JCM 2152 / NBRC 15305 / NCIMB 9373 / NCTC 2599 / NRRL B-3711), this protein is Acetylglutamate kinase.